The chain runs to 104 residues: Large ribosomal subunit protein bL21 (104 aa).

Belongs to the bacterial ribosomal protein bL21 family. As to quaternary structure, part of the 50S ribosomal subunit. Contacts protein L20.

In terms of biological role, this protein binds to 23S rRNA in the presence of protein L20. The chain is Large ribosomal subunit protein bL21 from Moorella thermoacetica (strain ATCC 39073 / JCM 9320).